We begin with the raw amino-acid sequence, 441 residues long: GTPase Der (441 aa).

EngA-type G domains follow at residues 4–169 (PVVA…PEDI) and 178–353 (IKVA…DQAA). GTP is bound by residues 10–17 (GRPNVGKS), 57–61 (DTGGI), 120–123 (NKVD), 184–191 (GKPNAGKS), 231–235 (DTAGI), and 296–299 (NKWD). In terms of domain architecture, KH-like spans 354-438 (FRISTGMLND…PIRFIHRQRE (85 aa)).

Belongs to the TRAFAC class TrmE-Era-EngA-EngB-Septin-like GTPase superfamily. EngA (Der) GTPase family. Associates with the 50S ribosomal subunit.

Functionally, GTPase that plays an essential role in the late steps of ribosome biogenesis. The chain is GTPase Der from Ruminiclostridium cellulolyticum (strain ATCC 35319 / DSM 5812 / JCM 6584 / H10) (Clostridium cellulolyticum).